Consider the following 147-residue polypeptide: Hemoglobin subunit beta (147 aa).

Val2 is modified (N-acetylvaline). The 145-residue stretch at 3–147 (HLTGEEKAAV…VANALAHKYH (145 aa)) folds into the Globin domain. Thr13 bears the Phosphothreonine mark. The residue at position 45 (Ser45) is a Phosphoserine. Residue Lys60 is modified to N6-acetyllysine. His64 is a binding site for heme b. Position 83 is an N6-acetyllysine (Lys83). His93 lines the heme b pocket. Position 94 is an S-nitrosocysteine (Cys94). Lys145 bears the N6-acetyllysine mark.

The protein belongs to the globin family. As to quaternary structure, heterotetramer of two alpha chains and two beta chains. Red blood cells.

Functionally, involved in oxygen transport from the lung to the various peripheral tissues. The protein is Hemoglobin subunit beta (HBB) of Lagothrix lagotricha (Brown woolly monkey).